A 3313-amino-acid polypeptide reads, in one-letter code: PHD finger protein rhinoceros (3313 aa).

The segment covering 1-16 (MSQRGKRGNQHHHQSH) has biased composition (basic residues). Positions 1–136 (MSQRGKRGNQ…QGASTSSSWQ (136 aa)) are disordered. Low complexity-rich tracts occupy residues 42 to 71 (PPNG…ATGG) and 100 to 134 (LGAA…TSSS). The PHD-type 1 zinc-finger motif lies at 323 to 373 (NVICDVCRSPDSEEANEMVFCDNCNICVHQACYGITAIPSGQWLCRTCSMG). The segment at 375 to 409 (TPDCVLCPNKAGAMKSNKSGKHWAHVSCALWIPEV) adopts a C2HC pre-PHD-type zinc-finger fold. A PHD-type 2; degenerate zinc finger spans residues 433-487 (LVCVLCRKRVGSCIQCSKHSMSKGKKENAGGASGGGSASVTSSMHKANKYATGTG). 17 disordered regions span residues 453–526 (MSKG…ARAQ), 708–1076 (LQSG…TKAA), 1107–1842 (KEAK…PPSH), 1961–2033 (AQKE…TMGN), 2104–2136 (PVTA…RMQR), 2145–2164 (ARRS…PPAT), 2219–2252 (AAPQ…FNGG), 2353–2374 (PAYP…PAHP), 2398–2514 (VAAK…PPPM), 2563–2587 (TTRG…LHPV), 2647–2679 (ATGT…QPPA), 2827–2871 (SCGL…SSSR), 2888–2954 (LAGA…IKIR), 2978–2998 (YEMT…YSTP), 3017–3077 (DFDK…SATT), 3144–3233 (KAEK…SLPE), and 3259–3313 (YENS…CEVR). The span at 512 to 526 (KNDMTSEERNQARAQ) shows a compositional bias: basic and acidic residues. A compositionally biased stretch (polar residues) spans 735–749 (KKLNNGAITSRTSSP). Positions 760–772 (STSTSTATATTAA) are enriched in low complexity. Positions 792–802 (GAATGTSTHNK) are enriched in polar residues. 2 stretches are compositionally biased toward low complexity: residues 803-861 (TQSQ…ASGI) and 894-912 (EAAA…ATSS). The span at 919–934 (QQRRRQEPERERDGRG) shows a compositional bias: basic and acidic residues. Residues 942 to 955 (TVPNRTQPTKSKQS) are compositionally biased toward polar residues. Residues 956–972 (TQADAGSGAGTGAAVET) are compositionally biased toward low complexity. The segment covering 994–1003 (ESLSSDESEE) has biased composition (acidic residues). Over residues 1015-1025 (AALSSGLAASG) the composition is skewed to low complexity. Over residues 1058–1072 (VESNVSDSQNQQTIR) the composition is skewed to polar residues. Composition is skewed to basic and acidic residues over residues 1159-1168 (AADRMREPES) and 1178-1205 (KLKD…KEQS). Positions 1250–1266 (EAKSTAPAAKPTAAKTS) are enriched in low complexity. A compositionally biased stretch (polar residues) spans 1285 to 1301 (LKSSKPLQDTTFSTANE). 3 stretches are compositionally biased toward low complexity: residues 1308–1324 (AATT…GVAT), 1377–1404 (SSSS…SGSD), and 1451–1464 (PAAS…AAAT). A compositionally biased stretch (polar residues) spans 1475–1485 (TARTRQNSTNK). Residues 1551-1579 (SPEKQTARRKSRADESPKKIPNLEHEINQ) are compositionally biased toward basic and acidic residues. The segment covering 1638–1650 (PVVEPEVETEIEP) has biased composition (acidic residues). A compositionally biased stretch (polar residues) spans 1667–1678 (TAPTHTQLSANA). The span at 1691–1702 (PAAPLPASPTPT) shows a compositional bias: pro residues. Basic residues predominate over residues 1722 to 1734 (SRWRSRRRRRRRS). The stretch at 1744-1773 (HTQHLLNEMEMARELEEERKNELLANASKY) forms a coiled coil. The segment covering 1753-1765 (EMARELEEERKNE) has biased composition (basic and acidic residues). Polar residues-rich tracts occupy residues 1771 to 1781 (SKYSASTSSPA) and 1796 to 1805 (DSNSANSGGD). Residues 1806–1819 (QQQQQQQQPLPQQL) show a composition bias toward low complexity. Over residues 1823–1832 (SPSSEVASTI) the composition is skewed to polar residues. Residues 1965–1984 (QQQQQQQQQQQQQQQQQQQQ) show a composition bias toward low complexity. Polar residues-rich tracts occupy residues 1985–1999 (SCLY…SVAS) and 2007–2018 (MTANSGSYANSL). Residues 2019–2033 (TNTPNATPTNATMGN) show a composition bias toward low complexity. Over residues 2106–2118 (TAQSGAGSNSNKL) the composition is skewed to polar residues. Composition is skewed to low complexity over residues 2148 to 2157 (SSSPSSVSES) and 2222 to 2242 (QQQT…QQQQ). Residues 2439-2451 (PVQPQPPTPPAPA) are compositionally biased toward pro residues. Positions 2479-2488 (GSGGSGAPGR) are enriched in gly residues. Positions 2658–2679 (PAVSAAPVAPAPAPAANSQPPA) are enriched in low complexity. Over residues 2891–2900 (ASGGGAGTAS) the composition is skewed to gly residues. The span at 2909–2924 (CSSGSNNDNNGKTGAA) shows a compositional bias: polar residues. A compositionally biased stretch (basic and acidic residues) spans 2935–2946 (KTLESSEDDHQT). The segment covering 3017–3026 (DFDKGEENNK) has biased composition (basic and acidic residues). The span at 3046 to 3065 (KRPKSSKPKKDKKEKKRQKQ) shows a compositional bias: basic residues. A compositionally biased stretch (polar residues) spans 3179-3198 (TSPQGLLLNSFTPHSQNANA). Positions 3268–3290 (SASGTGSASSNSCNSNSNNNNNN) are enriched in low complexity. Gly residues predominate over residues 3291–3302 (GSGGGAASGGGS).

It belongs to the JADE family.

It is found in the nucleus. In terms of biological role, may function as a negative regulator of the EGFR/Ras/MAPK signaling pathway during eye development. In Drosophila pseudoobscura pseudoobscura (Fruit fly), this protein is PHD finger protein rhinoceros (rno).